The primary structure comprises 175 residues: Alkyl hydroperoxide reductase AhpD (175 aa).

C131 functions as the Proton donor in the catalytic mechanism. A disulfide bridge connects residues C131 and C134. C134 (cysteine sulfenic acid (-SOH) intermediate) is an active-site residue.

The protein belongs to the AhpD family.

It carries out the reaction N(6)-[(R)-dihydrolipoyl]-L-lysyl-[lipoyl-carrier protein] + a hydroperoxide = N(6)-[(R)-lipoyl]-L-lysyl-[lipoyl-carrier protein] + an alcohol + H2O. In terms of biological role, antioxidant protein with alkyl hydroperoxidase activity. Required for the reduction of the AhpC active site cysteine residues and for the regeneration of the AhpC enzyme activity. The protein is Alkyl hydroperoxide reductase AhpD of Brucella abortus (strain 2308).